The chain runs to 101 residues: Aspartyl/glutamyl-tRNA(Asn/Gln) amidotransferase subunit C (101 aa).

It belongs to the GatC family. In terms of assembly, heterotrimer of A, B and C subunits.

It catalyses the reaction L-glutamyl-tRNA(Gln) + L-glutamine + ATP + H2O = L-glutaminyl-tRNA(Gln) + L-glutamate + ADP + phosphate + H(+). It carries out the reaction L-aspartyl-tRNA(Asn) + L-glutamine + ATP + H2O = L-asparaginyl-tRNA(Asn) + L-glutamate + ADP + phosphate + 2 H(+). In terms of biological role, allows the formation of correctly charged Asn-tRNA(Asn) or Gln-tRNA(Gln) through the transamidation of misacylated Asp-tRNA(Asn) or Glu-tRNA(Gln) in organisms which lack either or both of asparaginyl-tRNA or glutaminyl-tRNA synthetases. The reaction takes place in the presence of glutamine and ATP through an activated phospho-Asp-tRNA(Asn) or phospho-Glu-tRNA(Gln). The sequence is that of Aspartyl/glutamyl-tRNA(Asn/Gln) amidotransferase subunit C from Lactococcus lactis subsp. cremoris (strain SK11).